Here is a 513-residue protein sequence, read N- to C-terminus: Na(+)/H(+) antiporter NhaB (513 aa).

12 consecutive transmembrane segments (helical) span residues 21–41, 64–84, 88–108, 119–139, 143–163, 202–222, 243–263, 299–318, 322–344, 350–370, 389–409, and 477–497; these read ICII…SPFV, QPGG…AHHV, IMAN…IYFM, LLIV…SATF, FLDA…FYGV, LLMH…VGEP, LPVS…LEHF, MGIQ…LHLA, IIGL…HAIG, PMPF…IVDL, LALF…VFVG, and MALP…EFLL.

It belongs to the NhaB Na(+)/H(+) (TC 2.A.34) antiporter family.

The protein resides in the cell inner membrane. It carries out the reaction 2 Na(+)(in) + 3 H(+)(out) = 2 Na(+)(out) + 3 H(+)(in). Na(+)/H(+) antiporter that extrudes sodium in exchange for external protons. The sequence is that of Na(+)/H(+) antiporter NhaB from Actinobacillus pleuropneumoniae serotype 3 (strain JL03).